A 118-amino-acid polypeptide reads, in one-letter code: Large ribosomal subunit protein uL18 (118 aa).

The protein belongs to the universal ribosomal protein uL18 family. Part of the 50S ribosomal subunit; part of the 5S rRNA/L5/L18/L25 subcomplex. Contacts the 5S and 23S rRNAs.

In terms of biological role, this is one of the proteins that bind and probably mediate the attachment of the 5S RNA into the large ribosomal subunit, where it forms part of the central protuberance. This is Large ribosomal subunit protein uL18 from Mycoplasmopsis pulmonis (strain UAB CTIP) (Mycoplasma pulmonis).